Here is a 257-residue protein sequence, read N- to C-terminus: MAERRLTGLALKVGPLGEHDRLLSLLSNAEGVSRFAVPGARRPRSSLAAAAPLTLLELQVGGRSGLARVRQLRVLRSFSGLGQQLETLAAAQALCDLCIQLAAEDPVEGLLDTMQLHLERLEEHRADPELVLAGTVQACIHLLTLGGYGLPLQTCCITGDPLEPPLGQWDWRCSLLAQDGFAIDEQPGAAIQLNPSELALLQRLTRAELPRRRDGELMGPPAVWRRLLRVVEIWSRTHLNRPSKALAMLRETLLAGA.

The protein belongs to the RecO family.

Its function is as follows. Involved in DNA repair and RecF pathway recombination. The chain is DNA repair protein RecO from Synechococcus sp. (strain CC9605).